The following is a 192-amino-acid chain: Large ribosomal subunit protein bL25 (192 aa).

It belongs to the bacterial ribosomal protein bL25 family. CTC subfamily. As to quaternary structure, part of the 50S ribosomal subunit; part of the 5S rRNA/L5/L18/L25 subcomplex. Contacts the 5S rRNA. Binds to the 5S rRNA independently of L5 and L18.

Its function is as follows. This is one of the proteins that binds to the 5S RNA in the ribosome where it forms part of the central protuberance. The protein is Large ribosomal subunit protein bL25 of Solidesulfovibrio magneticus (strain ATCC 700980 / DSM 13731 / RS-1) (Desulfovibrio magneticus).